A 358-amino-acid chain; its full sequence is Transmembrane protein 144 homolog B (358 aa).

10 helical membrane passes run 6 to 26, 35 to 55, 60 to 79, 86 to 108, 122 to 142, 211 to 231, 244 to 264, 279 to 299, 307 to 327, and 337 to 357; these read VIGY…YVPV, LAFT…AMFI, IFDP…NFCV, IGIG…FTGK, PALN…FFFI, ILGI…MVPM, LSFV…VFIV, IFPS…LMVA, IGFP…SVFY, and LLIL…LALS.

The protein belongs to the TMEM144 family.

The protein localises to the membrane. The protein is Transmembrane protein 144 homolog B (tmem144B) of Dictyostelium discoideum (Social amoeba).